We begin with the raw amino-acid sequence, 507 residues long: Inactive alanine aminotransferase (507 aa).

Pyridoxal 5'-phosphate is bound by residues alanine 173, serine 174, tyrosine 199, asparagine 255, and serine 324. Lysine 327 bears the N6-(pyridoxal phosphate)lysine mark. Arginine 336 contacts pyridoxal 5'-phosphate.

Belongs to the class-I pyridoxal-phosphate-dependent aminotransferase family. Alanine aminotransferase subfamily. As to quaternary structure, homodimer. The cofactor is pyridoxal 5'-phosphate.

The protein resides in the cytoplasm. The protein localises to the nucleus. In terms of biological role, inactive alanine aminotransferase. Forms a catalytically active Schiff base with PLP, but lacks alanine transaminase activity, probably due to an altered structural conformation of the dimeric enzyme. This suggests this protein may have a yet undiscovered physiological function. This is Inactive alanine aminotransferase (ALT2) from Saccharomyces cerevisiae (strain ATCC 204508 / S288c) (Baker's yeast).